The primary structure comprises 275 residues: NifU-like protein 5, mitochondrial (275 aa).

A mitochondrion-targeting transit peptide spans M1–S61.

This sequence belongs to the NifU family.

The protein resides in the mitochondrion. Its function is as follows. Molecular scaffold for [Fe-S] cluster assembly of mitochondrial iron-sulfur proteins. The chain is NifU-like protein 5, mitochondrial (NIFU5) from Arabidopsis thaliana (Mouse-ear cress).